Consider the following 376-residue polypeptide: Chaperone protein DnaJ (376 aa).

The J domain maps to 5–70 (DYYEILGVSK…QKRAAYDQYG (66 aa)). Residues 131 to 209 (GVTKEIRIPT…CHGHGRVERS (79 aa)) form a CR-type zinc finger. The Zn(2+) site is built by Cys-144, Cys-147, Cys-161, Cys-164, Cys-183, Cys-186, Cys-197, and Cys-200. CXXCXGXG motif repeat units lie at residues 144–151 (CDVCHGSG), 161–168 (CPTCHGSG), 183–190 (CPHCQGRG), and 197–204 (CNKCHGHG).

This sequence belongs to the DnaJ family. Homodimer. Zn(2+) is required as a cofactor.

Its subcellular location is the cytoplasm. In terms of biological role, participates actively in the response to hyperosmotic and heat shock by preventing the aggregation of stress-denatured proteins and by disaggregating proteins, also in an autonomous, DnaK-independent fashion. Unfolded proteins bind initially to DnaJ; upon interaction with the DnaJ-bound protein, DnaK hydrolyzes its bound ATP, resulting in the formation of a stable complex. GrpE releases ADP from DnaK; ATP binding to DnaK triggers the release of the substrate protein, thus completing the reaction cycle. Several rounds of ATP-dependent interactions between DnaJ, DnaK and GrpE are required for fully efficient folding. Also involved, together with DnaK and GrpE, in the DNA replication of plasmids through activation of initiation proteins. The protein is Chaperone protein DnaJ of Escherichia coli (strain K12 / DH10B).